Here is a 589-residue protein sequence, read N- to C-terminus: Deoxynucleoside triphosphate triphosphohydrolase SAMHD1 (589 aa).

The residue at position 1 (Met1) is an N-acetylmethionine. Residues 1 to 10 (MQSADSQNTP) show a composition bias toward polar residues. Residues 1–41 (MQSADSQNTPKRPRRDGSPRTPPDSPLADAETSPSHDLDPD) form a disordered region. The residue at position 18 (Ser18) is a Phosphoserine. At Thr21 the chain carries Phosphothreonine. Phosphoserine is present on residues Ser33 and Ser88. The SAM domain occupies 45–100 (WGPEQVWSFLRRCGFSDSELLKRCREKRMSGSLLPFPEDLGISSHGKKMKLLNCIQ). Lys104 and Val105 together coordinate GTP. Position 107 (Asn107) interacts with dGTP. Residues Asp125, Gln130, and Arg133 each contribute to the GTP site. DGTP contacts are provided by Gln137, Leu138, Val144, and Arg152. Gln137 provides a ligand contact to dATP. A dCTP-binding site is contributed by Gln137. Gln137 lines the dTTP pocket. Residue Arg152 coordinates dATP. DCTP is bound at residue Arg152. Arg152 contacts dTTP. The HD domain maps to 152-277 (RFEHSLGVGY…IKDASKWLYK (126 aa)). The Mn(2+) site is built by His155, His194, and Asp195. DATP is bound by residues His198 and His203. Positions 198 and 203 each coordinate dCTP. 2 residues coordinate dTTP: His198 and His203. The active site involves His221. Asp300 lines the Mn(2+) pocket. Residues Lys301, Tyr304, Asp308, Arg322, Arg341, Lys343, Asn347, Arg355, Tyr363, Gln364, His365, and Lys366 each coordinate dGTP. Positions 301, 304, and 308 each coordinate dATP. DCTP contacts are provided by Lys301, Tyr304, and Asp308. The dTTP site is built by Lys301, Tyr304, and Asp308. Arg355 is a binding site for dATP. Residue Arg355 coordinates dCTP. Gln364 lines the dATP pocket. Gln364 lines the dCTP pocket. Gln364 contributes to the dTTP binding site. Residues Arg440 and Lys444 each contribute to the GTP site. Lys457 is covalently cross-linked (Glycyl lysine isopeptide (Lys-Gly) (interchain with G-Cter in SUMO2)). GTP is bound at residue Lys512. Lys512 is a binding site for dGTP.

It belongs to the SAMHD1 family. Homodimer; in absence of GTP and dNTP. Homotetramer; in GTP- and dNTP-bound form. Interacts with MRE11; leading to stimulate the exonuclease activity of MRE11. Interacts with RBBP8/CtIP. Interacts (via its C-terminus) with CD81. Requires Zn(2+) as cofactor.

The protein localises to the nucleus. Its subcellular location is the chromosome. It catalyses the reaction a 2'-deoxyribonucleoside 5'-triphosphate + H2O = a 2'-deoxyribonucleoside + triphosphate + H(+). The enzyme catalyses dATP + H2O = 2'-deoxyadenosine + triphosphate + H(+). The catalysed reaction is dCTP + H2O = 2'-deoxycytidine + triphosphate + H(+). It carries out the reaction dGTP + H2O = 2'-deoxyguanosine + triphosphate + H(+). It catalyses the reaction dTTP + H2O = thymidine + triphosphate + H(+). Allosterically activated and regulated via the combined actions of GTP and dNTPs (dATP, dGTP, dTTP and dCTP): Allosteric site 1 binds GTP, while allosteric site 2 binds dNTP. Allosteric activation promotes the formation of highly active homotetramers. In terms of biological role, protein that acts both as a host restriction factor involved in defense response to virus and as a regulator of DNA end resection at stalled replication forks. Has deoxynucleoside triphosphate (dNTPase) activity, which is required to restrict infection by viruses: dNTPase activity reduces cellular dNTP levels to levels too low for retroviral reverse transcription to occur, blocking early-stage virus replication in dendritic and other myeloid cells. Likewise, suppresses LINE-1 retrotransposon activity. In addition to virus restriction, dNTPase activity acts as a regulator of DNA precursor pools by regulating dNTP pools. Functions during S phase at stalled DNA replication forks to promote the resection of gapped or reversed forks: acts by stimulating the exonuclease activity of MRE11, activating the ATR-CHK1 pathway and allowing the forks to restart replication. Its ability to promote degradation of nascent DNA at stalled replication forks is required to prevent induction of type I interferons, thereby preventing chronic inflammation. Ability to promote DNA end resection at stalled replication forks is independent of dNTPase activity. Enhances immunoglobulin hypermutation in B-lymphocytes by promoting transversion mutation. The polypeptide is Deoxynucleoside triphosphate triphosphohydrolase SAMHD1 (Bos taurus (Bovine)).